We begin with the raw amino-acid sequence, 185 residues long: Ribosome-recycling factor (185 aa).

Belongs to the RRF family.

It localises to the cytoplasm. Its function is as follows. Responsible for the release of ribosomes from messenger RNA at the termination of protein biosynthesis. May increase the efficiency of translation by recycling ribosomes from one round of translation to another. This is Ribosome-recycling factor from Aeromonas hydrophila subsp. hydrophila (strain ATCC 7966 / DSM 30187 / BCRC 13018 / CCUG 14551 / JCM 1027 / KCTC 2358 / NCIMB 9240 / NCTC 8049).